Reading from the N-terminus, the 380-residue chain is Methenyltetrahydrofolate synthase domain-containing protein (380 aa).

The span at 245–258 (EEQAGKDVTLRDGP) shows a compositional bias: basic and acidic residues. Disordered stretches follow at residues 245–283 (EEQAGKDVTLRDGPRSPPGATRSPRDLAPPELGSVPLSS) and 361–380 (LVGSHTAEPLPDHQPAIAGP). An RRM domain is found at 282–355 (SSVQIGNLPR…NTVRVVLARQ (74 aa)).

This is Methenyltetrahydrofolate synthase domain-containing protein (MTHFSD) from Bos taurus (Bovine).